A 114-amino-acid chain; its full sequence is Helper of Tim protein 13 (114 aa).

The CHY-type; degenerate zinc-finger motif lies at 10–90 (LVDKESRCEH…DSLQCPNCRS (81 aa)). Zn(2+) is bound by residues Cys17, His19, Cys40, Cys43, Cys67, Cys70, Cys85, and Cys88.

As to quaternary structure, interacts with the small Tim proteins.

The protein resides in the mitochondrion intermembrane space. It localises to the mitochondrion membrane. Required for the assembly or recycling of the small Tim proteins in the mitochondrial intermembrane, thereby participating in the import and insertion of multi-pass transmembrane proteins into the mitochondrial inner membrane. The polypeptide is Helper of Tim protein 13 (HOT13) (Kluyveromyces lactis (strain ATCC 8585 / CBS 2359 / DSM 70799 / NBRC 1267 / NRRL Y-1140 / WM37) (Yeast)).